A 180-amino-acid polypeptide reads, in one-letter code: DNA replication regulator protein HobA (180 aa).

Glu-17, Glu-27, Glu-140, Glu-143, and Asn-176 together coordinate Ca(2+).

Forms dimers and homotetramers. Interacts with domains I and II (residues 1-112) of DnaA. In a crystal with domains I and II of DnaA HobA forms tetramers with DnaA fragments bound at the dimer interface of the tetramer. Ca(2+) is required as a cofactor.

In terms of biological role, required for DNA replication initiation. Increases binding of DnaA to oriC region. The polypeptide is DNA replication regulator protein HobA (Helicobacter pylori (strain ATCC 700392 / 26695) (Campylobacter pylori)).